Reading from the N-terminus, the 138-residue chain is Large-conductance mechanosensitive channel (138 aa).

Helical transmembrane passes span 15–35 (VDLA…NSIV), 38–58 (IIMP…MFIQ), and 80–100 (GNFI…FLVV).

It belongs to the MscL family. In terms of assembly, homopentamer.

It localises to the cell inner membrane. In terms of biological role, channel that opens in response to stretch forces in the membrane lipid bilayer. May participate in the regulation of osmotic pressure changes within the cell. The sequence is that of Large-conductance mechanosensitive channel from Brucella canis (strain ATCC 23365 / NCTC 10854 / RM-666).